The chain runs to 362 residues: Aminomethyltransferase (362 aa).

Belongs to the GcvT family. The glycine cleavage system is composed of four proteins: P, T, L and H.

It catalyses the reaction N(6)-[(R)-S(8)-aminomethyldihydrolipoyl]-L-lysyl-[protein] + (6S)-5,6,7,8-tetrahydrofolate = N(6)-[(R)-dihydrolipoyl]-L-lysyl-[protein] + (6R)-5,10-methylene-5,6,7,8-tetrahydrofolate + NH4(+). Functionally, the glycine cleavage system catalyzes the degradation of glycine. The protein is Aminomethyltransferase of Listeria monocytogenes serotype 4b (strain F2365).